Here is a 780-residue protein sequence, read N- to C-terminus: E3 SUMO-protein ligase gei-17 (780 aa).

Residues 181–210 (APLHSSFPNHGRSSQQSLQKSEKSNRPKKM) form a disordered region. The 165-residue stretch at 203–367 (KSNRPKKMYA…AAGVYFVHRV (165 aa)) folds into the PINIT domain. Residues 400 to 485 (GEDDIAMDRL…LAKVDKNTTE (86 aa)) form an SP-RING-type zinc finger. Residues Cys431, His433, Cys454, and Cys457 each contribute to the Zn(2+) site. Residues 519–530 (GTASCSSTNGNG) are compositionally biased toward polar residues. 3 disordered regions span residues 519–544 (GTAS…ADDD), 560–594 (IMNS…KTKD), and 732–755 (QQHH…SFYA). Residues 732–749 (QQHHLQQQQQQQQSPQIM) are compositionally biased toward low complexity.

It belongs to the PIAS family. May interact with gex-3.

The protein operates within protein modification; protein sumoylation. Its function is as follows. Functions as an E3-type smo-1 ligase. Mediates smo-1 conjugation to air-2 in vitro and is required for proper chromosome alignment. In the early embryo, specifically suppresses checkpoint activation in response to DNA damage, maybe by promoting mus-101 sumoylation. In embryos, plays a role in determining telomere localization in the nucleus. Acts with pie-1 to promote piRNA-mediated silencing and fertility in the adult germline. In Caenorhabditis elegans, this protein is E3 SUMO-protein ligase gei-17.